A 369-amino-acid polypeptide reads, in one-letter code: 2-aminoethylphosphonate--pyruvate transaminase (369 aa).

N6-(pyridoxal phosphate)lysine is present on K193.

Belongs to the class-V pyridoxal-phosphate-dependent aminotransferase family. PhnW subfamily. As to quaternary structure, homodimer. Requires pyridoxal 5'-phosphate as cofactor.

The catalysed reaction is (2-aminoethyl)phosphonate + pyruvate = phosphonoacetaldehyde + L-alanine. Its function is as follows. Involved in phosphonate degradation. In Burkholderia pseudomallei (strain 1106a), this protein is 2-aminoethylphosphonate--pyruvate transaminase.